Reading from the N-terminus, the 906-residue chain is Protein translocase subunit SecA (906 aa).

Residues Gln-89, 107–111, and Asp-502 each bind ATP; that span reads GEGKT. Zn(2+) is bound by residues Cys-890, Cys-892, Cys-901, and His-902.

Belongs to the SecA family. Monomer and homodimer. Part of the essential Sec protein translocation apparatus which comprises SecA, SecYEG and auxiliary proteins SecDF-YajC and YidC. Zn(2+) is required as a cofactor.

The protein resides in the cell inner membrane. The protein localises to the cytoplasm. It catalyses the reaction ATP + H2O + cellular proteinSide 1 = ADP + phosphate + cellular proteinSide 2.. Part of the Sec protein translocase complex. Interacts with the SecYEG preprotein conducting channel. Has a central role in coupling the hydrolysis of ATP to the transfer of proteins into and across the cell membrane, serving both as a receptor for the preprotein-SecB complex and as an ATP-driven molecular motor driving the stepwise translocation of polypeptide chains across the membrane. The polypeptide is Protein translocase subunit SecA (Brucella suis biovar 1 (strain 1330)).